The following is a 96-amino-acid chain: Antitoxin TacA3 (96 aa).

The interval 61-96 (YLTERDTKMIMEILDNPPAPNEKLLAAAFALPDMKK) is neutralization domain.

This sequence belongs to the TacA antitoxin family. Forms a complex with cognate toxin TacT3. Forms a 4:2 antitoxin:toxin complex with cognate toxin TacT3. Forms a 4:4 antitoxin:toxin complex with promoter DNA, where 2 TacT3 dimers bridge 2 TacA3 dimers. Only TacA3 contacts promoter DNA.

Its function is as follows. Antitoxin component of a type II toxin-antitoxin (TA) system. Counteracts the toxic effect of cognate toxin TacT3, but not TacT1 or TacT2. Plays a role in persister cell formation. In terms of biological role, the TacA3-TacT3 complex both represses and derepresses expression of its own operon. The hexameric 4:2 TacA3-TacT3 complex binds promoter DNA and represses its transcription; both subunits are required. The octomeric 4:4 TacA3-TacT3 complex derepresses the operon. The shift from hexameric to octomeric complex probably alters DNA-binding, leading to dissociation from the operator DNA and derepression. Does not bind the promoter of the TacA1-TacT1 operon. The polypeptide is Antitoxin TacA3 (Salmonella typhimurium (strain 14028s / SGSC 2262)).